Here is a 469-residue protein sequence, read N- to C-terminus: 3-isopropylmalate dehydratase large subunit (469 aa).

3 residues coordinate [4Fe-4S] cluster: Cys-347, Cys-408, and Cys-411.

The protein belongs to the aconitase/IPM isomerase family. LeuC type 1 subfamily. As to quaternary structure, heterodimer of LeuC and LeuD. [4Fe-4S] cluster serves as cofactor.

The catalysed reaction is (2R,3S)-3-isopropylmalate = (2S)-2-isopropylmalate. It functions in the pathway amino-acid biosynthesis; L-leucine biosynthesis; L-leucine from 3-methyl-2-oxobutanoate: step 2/4. Catalyzes the isomerization between 2-isopropylmalate and 3-isopropylmalate, via the formation of 2-isopropylmaleate. In Histophilus somni (strain 129Pt) (Haemophilus somnus), this protein is 3-isopropylmalate dehydratase large subunit.